The following is a 194-amino-acid chain: RNA polymerase II subunit A C-terminal domain phosphatase SSU72 like protein 5 (194 aa).

The protein belongs to the SSU72 phosphatase family.

The protein resides in the nucleus. The catalysed reaction is O-phospho-L-seryl-[protein] + H2O = L-seryl-[protein] + phosphate. It carries out the reaction O-phospho-L-threonyl-[protein] + H2O = L-threonyl-[protein] + phosphate. Functionally, protein phosphatase that catalyzes the dephosphorylation of the C-terminal domain of RNA polymerase II. Plays a role in RNA processing and termination. The sequence is that of RNA polymerase II subunit A C-terminal domain phosphatase SSU72 like protein 5 from Homo sapiens (Human).